Here is a 286-residue protein sequence, read N- to C-terminus: 4-hydroxy-3-methylbut-2-enyl diphosphate reductase (286 aa).

Position 12 (C12) interacts with [4Fe-4S] cluster. (2E)-4-hydroxy-3-methylbut-2-enyl diphosphate is bound by residues H47 and H80. Residues H47 and H80 each contribute to the dimethylallyl diphosphate site. Isopentenyl diphosphate contacts are provided by H47 and H80. Residue C102 participates in [4Fe-4S] cluster binding. Position 130 (H130) interacts with (2E)-4-hydroxy-3-methylbut-2-enyl diphosphate. Dimethylallyl diphosphate is bound at residue H130. An isopentenyl diphosphate-binding site is contributed by H130. E132 serves as the catalytic Proton donor. T170 lines the (2E)-4-hydroxy-3-methylbut-2-enyl diphosphate pocket. C198 is a [4Fe-4S] cluster binding site. Positions 226, 228, and 270 each coordinate (2E)-4-hydroxy-3-methylbut-2-enyl diphosphate. Dimethylallyl diphosphate contacts are provided by S226, N228, and S270. Residues S226, N228, and S270 each coordinate isopentenyl diphosphate.

This sequence belongs to the IspH family. The cofactor is [4Fe-4S] cluster.

It catalyses the reaction isopentenyl diphosphate + 2 oxidized [2Fe-2S]-[ferredoxin] + H2O = (2E)-4-hydroxy-3-methylbut-2-enyl diphosphate + 2 reduced [2Fe-2S]-[ferredoxin] + 2 H(+). It carries out the reaction dimethylallyl diphosphate + 2 oxidized [2Fe-2S]-[ferredoxin] + H2O = (2E)-4-hydroxy-3-methylbut-2-enyl diphosphate + 2 reduced [2Fe-2S]-[ferredoxin] + 2 H(+). Its pathway is isoprenoid biosynthesis; dimethylallyl diphosphate biosynthesis; dimethylallyl diphosphate from (2E)-4-hydroxy-3-methylbutenyl diphosphate: step 1/1. The protein operates within isoprenoid biosynthesis; isopentenyl diphosphate biosynthesis via DXP pathway; isopentenyl diphosphate from 1-deoxy-D-xylulose 5-phosphate: step 6/6. Functionally, catalyzes the conversion of 1-hydroxy-2-methyl-2-(E)-butenyl 4-diphosphate (HMBPP) into a mixture of isopentenyl diphosphate (IPP) and dimethylallyl diphosphate (DMAPP). Acts in the terminal step of the DOXP/MEP pathway for isoprenoid precursor biosynthesis. This Desulfovibrio desulfuricans (strain ATCC 27774 / DSM 6949 / MB) protein is 4-hydroxy-3-methylbut-2-enyl diphosphate reductase.